A 190-amino-acid polypeptide reads, in one-letter code: Potassium-transporting ATPase KdpC subunit (190 aa).

The chain crosses the membrane as a helical span at residues 11–31 (LIVLMSLITGVAYPLVVTGVA).

Belongs to the KdpC family. As to quaternary structure, the system is composed of three essential subunits: KdpA, KdpB and KdpC.

It is found in the cell inner membrane. In terms of biological role, part of the high-affinity ATP-driven potassium transport (or Kdp) system, which catalyzes the hydrolysis of ATP coupled with the electrogenic transport of potassium into the cytoplasm. This subunit acts as a catalytic chaperone that increases the ATP-binding affinity of the ATP-hydrolyzing subunit KdpB by the formation of a transient KdpB/KdpC/ATP ternary complex. This is Potassium-transporting ATPase KdpC subunit from Pseudomonas syringae pv. tomato (strain ATCC BAA-871 / DC3000).